The chain runs to 45 residues: Putative UPF0377 protein YJL222W-B (45 aa).

The protein belongs to the UPF0377 family.

The sequence is that of Putative UPF0377 protein YJL222W-B from Saccharomyces cerevisiae (strain ATCC 204508 / S288c) (Baker's yeast).